Reading from the N-terminus, the 466-residue chain is Cysteine--tRNA ligase (466 aa).

C28 serves as a coordination point for Zn(2+). A 'HIGH' region motif is present at residues 30–40 (PTVYNYIHIGN). The Zn(2+) site is built by C208, H233, and E237. Residues 265-269 (KMSKS) carry the 'KMSKS' region motif. K268 serves as a coordination point for ATP.

Belongs to the class-I aminoacyl-tRNA synthetase family. In terms of assembly, monomer. It depends on Zn(2+) as a cofactor.

Its subcellular location is the cytoplasm. It catalyses the reaction tRNA(Cys) + L-cysteine + ATP = L-cysteinyl-tRNA(Cys) + AMP + diphosphate. The polypeptide is Cysteine--tRNA ligase (Staphylococcus aureus (strain MRSA252)).